Consider the following 585-residue polypeptide: Protein FAM13C (585 aa).

3 disordered regions span residues 26-45 (PVSL…ENNK), 83-138 (SMGN…NAFK), and 171-216 (EAAQ…APED). Basic and acidic residues-rich tracts occupy residues 27 to 45 (VSLH…ENNK) and 99 to 112 (ESGR…ETEH). S131 is subject to Phosphoserine. S238 bears the Phosphoserine mark. 3 disordered regions span residues 250–282 (FNLD…DGKE), 349–391 (EEQG…EETP), and 441–477 (IPTI…DHLT). Residues 262 to 275 (STQQFMMPRSSSRC) are compositionally biased toward polar residues. Phosphoserine is present on residues S385 and S386.

Belongs to the FAM13 family.

The chain is Protein FAM13C (FAM13C) from Homo sapiens (Human).